Reading from the N-terminus, the 1026-residue chain is Multidrug resistance protein MdtC (1026 aa).

11 helical membrane passes run 15 to 35 (ILIA…LPVA), 333 to 353 (EVEE…FLFL), 360 to 380 (LIPA…MYLC), 387 to 407 (LSLM…IVVL), 431 to 451 (VGFT…PLLL), 463 to 483 (FAVT…TLTP), 528 to 548 (LVGV…IAIP), 853 to 873 (LILI…LYES), 897 to 917 (LFNA…IGIV), 953 to 973 (PIMM…LSGG), and 984 to 1004 (ITIV…TPVV).

The protein belongs to the resistance-nodulation-cell division (RND) (TC 2.A.6) family. MdtC subfamily. As to quaternary structure, part of a tripartite efflux system composed of MdtA, MdtB and MdtC. MdtC forms a heteromultimer with MdtB.

Its subcellular location is the cell inner membrane. This chain is Multidrug resistance protein MdtC, found in Salmonella agona (strain SL483).